Consider the following 308-residue polypeptide: Inosose dehydratase (308 aa).

It belongs to the IolE/MocC family. Requires glutathione as cofactor. Co(2+) serves as cofactor. Mn(2+) is required as a cofactor.

It catalyses the reaction scyllo-inosose = 3D-3,5/4-trihydroxycyclohexane-1,2-dione + H2O. Its pathway is polyol metabolism; myo-inositol degradation into acetyl-CoA; acetyl-CoA from myo-inositol: step 2/7. Its function is as follows. Catalyzes the dehydration of inosose (2-keto-myo-inositol, 2KMI or 2,4,6/3,5-pentahydroxycyclohexanone) to 3D-(3,5/4)-trihydroxycyclohexane-1,2-dione (D-2,3-diketo-4-deoxy-epi-inositol). This Geobacillus kaustophilus (strain HTA426) protein is Inosose dehydratase.